A 212-amino-acid chain; its full sequence is MSLEMIAVLIFTMGYLLGSVPFGLILARLFGSVDVRQVGSGNIGATNVLRTGRKDLAALTLFFDIGKGALAVLLAHGFSYHLYQQTGCAPDLTLIAGAAAFLGHCYPVWLGFRGGKGVATMLGVSFAAWWVAGVVFAVAWLLSAKISRYSSVGGMVGAIAATISVMFMPASHEIHQVYIALFSGMTILLLWRHRGNIKRLLSGQESRIGDPQ.

The next 6 helical transmembrane spans lie at 6-26 (IAVL…GLIL), 56-76 (LAAL…LLAH), 92-112 (LTLI…WLGF), 122-142 (LGVS…AWLL), 150-170 (SSVG…FMPA), and 171-191 (SHEI…LLLW).

Belongs to the PlsY family. As to quaternary structure, probably interacts with PlsX.

It localises to the cell inner membrane. It catalyses the reaction an acyl phosphate + sn-glycerol 3-phosphate = a 1-acyl-sn-glycero-3-phosphate + phosphate. It functions in the pathway lipid metabolism; phospholipid metabolism. Functionally, catalyzes the transfer of an acyl group from acyl-phosphate (acyl-PO(4)) to glycerol-3-phosphate (G3P) to form lysophosphatidic acid (LPA). This enzyme utilizes acyl-phosphate as fatty acyl donor, but not acyl-CoA or acyl-ACP. The polypeptide is Glycerol-3-phosphate acyltransferase (Zymomonas mobilis subsp. mobilis (strain ATCC 31821 / ZM4 / CP4)).